A 115-amino-acid polypeptide reads, in one-letter code: Large ribosomal subunit protein bL21 (115 aa).

Belongs to the bacterial ribosomal protein bL21 family. As to quaternary structure, part of the 50S ribosomal subunit. Contacts protein L20.

Its function is as follows. This protein binds to 23S rRNA in the presence of protein L20. This chain is Large ribosomal subunit protein bL21, found in Coxiella burnetii (strain Dugway 5J108-111).